We begin with the raw amino-acid sequence, 670 residues long: MAEVVAEVAEMPTQMSPGAVEMSTPMSAEMMEMSTEVTEMTPGEALASSLFFQHHQFMCSECGSLYNTLEEVLSHQEQHMLAVSEEEALTTQNVGLEPELVPGAEGPFQCGECSQLILSPGELLAHQDAHLRESANQIQYQCWDCQELFPSPELWVAHRKAQHLSATVAEPPVPPPLPPPTPLPPPSPPSEVKMEPYECPECSTLCATPEEFLEHQGTHFDSLEKEERNGLEEEEEDDEEDEEDDEEMEDEEAMAEVGDDAVGGDESTAGWAQGCGDCPQHQPSAGARRQHRRTAHSPASATHPFHCSQCQRSFSSANRLQAHGRAHVGGTHECTTCSKVFKKAASLEQHLRLHRGEARYLCVDCGRGFGTELTLVAHRRAHTANPLHRCRCGKTFSNMTKFLYHRRTHAGKSGAPPTGATAPPAPAEPTPPPPPPAPPAQLPCPQCSKSFASASRLSRHRRAVHGPPERRHRCGVCGKGFKKLIHVRNHLRTHTGERPFQCHSCGKTFASLANLSRHQLTHTGARPYQCLDCGKRFTQSSNLQQHRRLHLRPVAFARAPRLPITGLYNKSPYYCGTCGRWFRAMAGLRLHQRVHARARTLTLQPPRSPSPAPPPPPEPQQTIMCTELGETIAIIETSQPLALEDTLQLCQAALGASEAGGLLQLDTAFV.

3 consecutive C2H2-type zinc fingers follow at residues 57 to 79, 108 to 130, and 140 to 163; these read FMCS…QEQH, FQCG…QDAH, and YQCW…KAQH. 2 disordered regions span residues 168-196 and 217-304; these read VAEP…KMEP and GTHF…ATHP. Pro residues predominate over residues 171-189; sequence PPVPPPLPPPTPLPPPSPP. The segment at 197 to 219 adopts a C2H2-type 4 zinc-finger fold; that stretch reads YECPECSTLCATPEEFLEHQGTH. Residues 217-231 show a composition bias toward basic and acidic residues; that stretch reads GTHFDSLEKEERNGL. A compositionally biased stretch (acidic residues) spans 232–263; that stretch reads EEEEEDDEEDEEDDEEMEDEEAMAEVGDDAVG. C2H2-type zinc fingers lie at residues 305–327, 332–354, 360–382, 388–409, 442–465, 472–494, 500–522, 528–550, and 573–595; these read FHCS…GRAH, HECT…LRLH, YLCV…RRAH, HRCR…RRTH, LPCP…RAVH, HRCG…LRTH, FQCH…QLTH, YQCL…RRLH, and YYCG…QRVH. Residues 409 to 443 form a disordered region; the sequence is HAGKSGAPPTGATAPPAPAEPTPPPPPPAPPAQLP. Residues 423–442 show a composition bias toward pro residues; the sequence is PPAPAEPTPPPPPPAPPAQL. The tract at residues 601–621 is disordered; it reads LTLQPPRSPSPAPPPPPEPQQ. Residues 606–619 are compositionally biased toward pro residues; sequence PRSPSPAPPPPPEP.

It belongs to the krueppel C2H2-type zinc-finger protein family. In terms of tissue distribution, widely expressed.

Its subcellular location is the nucleus. May be involved in transcriptional regulation. The chain is Zinc finger protein 526 (ZNF526) from Homo sapiens (Human).